Reading from the N-terminus, the 430-residue chain is Probable proton-coupled zinc antiporter SLC30A4 (430 aa).

At Met1–Arg113 the chain is on the cytoplasmic side. Residue Ser36 is modified to Phosphoserine. A helical membrane pass occupies residues Leu114–Met134. At Ala135–Asp143 the chain is on the lumenal side. A helical membrane pass occupies residues Ala144–Ser164. His146 and Asp150 together coordinate Zn(2+). At Ser165–Arg178 the chain is on the cytoplasmic side. Residues Leu179–Leu199 traverse the membrane as a helical segment. The Lumenal segment spans residues Tyr200–Asp216. A helical transmembrane segment spans residues Val217 to Asn237. At Gln238–Ala275 the chain is on the cytoplasmic side. Residues Gly240–His265 are zinc binding. Residues His245–Asn264 are disordered. Over residues His249–His263 the composition is skewed to low complexity. A helical membrane pass occupies residues Phe276–Ile296. Zn(2+) contacts are provided by His278 and Asp282. At Arg297 to Tyr311 the chain is on the lumenal side. A helical membrane pass occupies residues Ile312–Ile332. Residues Leu333–Thr430 are Cytoplasmic-facing.

It belongs to the cation diffusion facilitator (CDF) transporter (TC 2.A.4) family. SLC30A subfamily. In terms of assembly, homodimerization could regulate efficiency for zinc transport. Interacts with TMEM163. Widely expressed. Highly expressed in the brain and in mammary epithelial cell lines.

The protein resides in the endosome membrane. It localises to the late endosome membrane. It is found in the lysosome membrane. The enzyme catalyses Zn(2+)(in) + 2 H(+)(out) = Zn(2+)(out) + 2 H(+)(in). Its function is as follows. Probable proton-coupled zinc ion antiporter mediating zinc import from cytoplasm potentially into the endocytic compartment. Controls zinc deposition in milk. The chain is Probable proton-coupled zinc antiporter SLC30A4 from Mus musculus (Mouse).